Here is a 183-residue protein sequence, read N- to C-terminus: Ubiquitin-conjugating enzyme E2-21 kDa (183 aa).

Residues 17–179 form the UBC core domain; it reads TCMSRIVKEY…VKYFLAERER (163 aa). Cys-115 serves as the catalytic Glycyl thioester intermediate.

Belongs to the ubiquitin-conjugating enzyme family.

The protein resides in the peroxisome. It carries out the reaction S-ubiquitinyl-[E1 ubiquitin-activating enzyme]-L-cysteine + [E2 ubiquitin-conjugating enzyme]-L-cysteine = [E1 ubiquitin-activating enzyme]-L-cysteine + S-ubiquitinyl-[E2 ubiquitin-conjugating enzyme]-L-cysteine.. The protein operates within protein modification; protein ubiquitination. Functionally, catalyzes the covalent attachment of ubiquitin to other proteins. Essential for peroxisome biogenesis. Required for UBC4-independent ubiquitination of PEX5. This is Ubiquitin-conjugating enzyme E2-21 kDa (PEX4) from Saccharomyces cerevisiae (strain ATCC 204508 / S288c) (Baker's yeast).